Reading from the N-terminus, the 328-residue chain is N-acyl-aromatic-L-amino acid amidohydrolase (carboxylate-forming) A (328 aa).

Zn(2+)-binding residues include His30 and Glu33. Substrate is bound by residues Arg74 and Asn81–Arg82. Position 127 (His127) interacts with Zn(2+). 2 residues coordinate substrate: Glu189 and Tyr300.

The protein belongs to the AspA/AstE family. Aspartoacylase subfamily. As to quaternary structure, homotetramer. The cofactor is Zn(2+).

It is found in the apical cell membrane. The protein localises to the cytoplasm. The catalysed reaction is an N-acyl-aromatic L-alpha-amino acid + H2O = an aromatic L-alpha-amino acid + a carboxylate. The enzyme catalyses an N-acetyl-L-cysteine-S-conjugate + H2O = an S-substituted L-cysteine + acetate. Plays an important role in deacetylating mercapturic acids in kidney proximal tubules. The protein is N-acyl-aromatic-L-amino acid amidohydrolase (carboxylate-forming) A (acy3.1) of Danio rerio (Zebrafish).